Reading from the N-terminus, the 236-residue chain is Phosphoribosylaminoimidazole-succinocarboxamide synthase (236 aa).

The protein belongs to the SAICAR synthetase family.

It carries out the reaction 5-amino-1-(5-phospho-D-ribosyl)imidazole-4-carboxylate + L-aspartate + ATP = (2S)-2-[5-amino-1-(5-phospho-beta-D-ribosyl)imidazole-4-carboxamido]succinate + ADP + phosphate + 2 H(+). It functions in the pathway purine metabolism; IMP biosynthesis via de novo pathway; 5-amino-1-(5-phospho-D-ribosyl)imidazole-4-carboxamide from 5-amino-1-(5-phospho-D-ribosyl)imidazole-4-carboxylate: step 1/2. The polypeptide is Phosphoribosylaminoimidazole-succinocarboxamide synthase (Campylobacter jejuni subsp. doylei (strain ATCC BAA-1458 / RM4099 / 269.97)).